The primary structure comprises 416 residues: RNA polymerase sigma factor SigA (416 aa).

Residues 184–254 (MVQSNLRLVV…TRAIADQSRT (71 aa)) are sigma-70 factor domain-2. An Interaction with polymerase core subunit RpoC motif is present at residues 208–211 (DLIQ). The interval 263–338 (ETISRIKKTT…EADGETPEDE (76 aa)) is sigma-70 factor domain-3. The segment at 351-404 (VLDTLSPRERDVLRLRYGLDDGRMKTLEEIGQIFNVTRERIRQIEAKALRKLRH) is sigma-70 factor domain-4. The segment at residues 377 to 396 (LEEIGQIFNVTRERIRQIEA) is a DNA-binding region (H-T-H motif).

This sequence belongs to the sigma-70 factor family. RpoD/SigA subfamily. As to quaternary structure, interacts transiently with the RNA polymerase catalytic core.

Its subcellular location is the cytoplasm. Its function is as follows. Sigma factors are initiation factors that promote the attachment of RNA polymerase to specific initiation sites and are then released. This sigma factor is the primary sigma factor during exponential growth. This is RNA polymerase sigma factor SigA from Microcystis aeruginosa.